Consider the following 428-residue polypeptide: Adenylosuccinate synthetase (428 aa).

GTP-binding positions include 12–18 and 40–42; these read GDEGKGK and GHT. Aspartate 13 (proton acceptor) is an active-site residue. 2 residues coordinate Mg(2+): aspartate 13 and glycine 40. Residues 13–16, 38–41, threonine 130, arginine 144, glutamine 225, threonine 240, and arginine 304 each bind IMP; these read DEGK and NAGH. Histidine 41 serves as the catalytic Proton donor. 300 to 306 lines the substrate pocket; sequence VTTGRSR. GTP is bound by residues arginine 306, 332 to 334, and 414 to 416; these read KID and GVG.

Belongs to the adenylosuccinate synthetase family. In terms of assembly, homodimer. The cofactor is Mg(2+).

Its subcellular location is the cytoplasm. It catalyses the reaction IMP + L-aspartate + GTP = N(6)-(1,2-dicarboxyethyl)-AMP + GDP + phosphate + 2 H(+). Its pathway is purine metabolism; AMP biosynthesis via de novo pathway; AMP from IMP: step 1/2. In terms of biological role, plays an important role in the de novo pathway of purine nucleotide biosynthesis. Catalyzes the first committed step in the biosynthesis of AMP from IMP. The protein is Adenylosuccinate synthetase of Clostridium botulinum (strain Alaska E43 / Type E3).